The sequence spans 495 residues: UDP-N-acetylmuramoyl-L-alanyl-D-glutamate--2,6-diaminopimelate ligase (495 aa).

UDP-N-acetyl-alpha-D-muramoyl-L-alanyl-D-glutamate contacts are provided by residues L27, S29, and 44–46 (HQA). 116–122 (GTNGKTT) is an ATP binding site. UDP-N-acetyl-alpha-D-muramoyl-L-alanyl-D-glutamate-binding positions include N157, 158–159 (TT), S185, Q191, and R193. K225 carries the post-translational modification N6-carboxylysine. Meso-2,6-diaminopimelate-binding positions include R390, 414–417 (DNPR), G465, and E469. The short motif at 414–417 (DNPR) is the Meso-diaminopimelate recognition motif element.

The protein belongs to the MurCDEF family. MurE subfamily. Requires Mg(2+) as cofactor. Carboxylation is probably crucial for Mg(2+) binding and, consequently, for the gamma-phosphate positioning of ATP.

Its subcellular location is the cytoplasm. It carries out the reaction UDP-N-acetyl-alpha-D-muramoyl-L-alanyl-D-glutamate + meso-2,6-diaminopimelate + ATP = UDP-N-acetyl-alpha-D-muramoyl-L-alanyl-gamma-D-glutamyl-meso-2,6-diaminopimelate + ADP + phosphate + H(+). The protein operates within cell wall biogenesis; peptidoglycan biosynthesis. In terms of biological role, catalyzes the addition of meso-diaminopimelic acid to the nucleotide precursor UDP-N-acetylmuramoyl-L-alanyl-D-glutamate (UMAG) in the biosynthesis of bacterial cell-wall peptidoglycan. This chain is UDP-N-acetylmuramoyl-L-alanyl-D-glutamate--2,6-diaminopimelate ligase, found in Salmonella typhimurium (strain LT2 / SGSC1412 / ATCC 700720).